Reading from the N-terminus, the 158-residue chain is Ribosome maturation factor RimP (158 aa).

It belongs to the RimP family.

The protein localises to the cytoplasm. Its function is as follows. Required for maturation of 30S ribosomal subunits. The polypeptide is Ribosome maturation factor RimP (Leuconostoc citreum (strain KM20)).